The primary structure comprises 567 residues: Urease subunit alpha (567 aa).

In terms of domain architecture, Urease spans 129–567; sequence GGIDAHIHFI…LPLAQRYFLF (439 aa). Ni(2+)-binding residues include His-134, His-136, and Lys-217. An N6-carboxylysine modification is found at Lys-217. Residue His-219 participates in substrate binding. 2 residues coordinate Ni(2+): His-246 and His-272. Catalysis depends on His-320, which acts as the Proton donor. Asp-360 serves as a coordination point for Ni(2+).

Belongs to the metallo-dependent hydrolases superfamily. Urease alpha subunit family. As to quaternary structure, heterotrimer of UreA (gamma), UreB (beta) and UreC (alpha) subunits. Three heterotrimers associate to form the active enzyme. It depends on Ni cation as a cofactor. Carboxylation allows a single lysine to coordinate two nickel ions.

The protein resides in the cytoplasm. It carries out the reaction urea + 2 H2O + H(+) = hydrogencarbonate + 2 NH4(+). It functions in the pathway nitrogen metabolism; urea degradation; CO(2) and NH(3) from urea (urease route): step 1/1. This is Urease subunit alpha from Hahella chejuensis (strain KCTC 2396).